A 157-amino-acid polypeptide reads, in one-letter code: Protein Smg homolog (157 aa).

This sequence belongs to the Smg family.

The chain is Protein Smg homolog from Shewanella frigidimarina (strain NCIMB 400).